The primary structure comprises 304 residues: Cbb3-type cytochrome c oxidase subunit CcoP (304 aa).

A run of 2 helical transmembrane segments spans residues 11 to 31 (LYVAGITVVSLIFCLVVLIVA) and 61 to 81 (WWAGLFLVTIAFAVIYLALYP). Cytochrome c domains are found at residues 129-209 (QAMA…LSLS) and 216-296 (VAAQ…WSLS). Heme c-binding residues include cysteine 142, cysteine 145, histidine 146, methionine 185, cysteine 228, cysteine 231, histidine 232, and methionine 273.

Belongs to the CcoP / FixP family. As to quaternary structure, component of the cbb3-type cytochrome c oxidase at least composed of CcoN, CcoO, CcoQ and CcoP. Heme c is required as a cofactor.

The protein resides in the cell inner membrane. Its pathway is energy metabolism; oxidative phosphorylation. Its function is as follows. C-type cytochrome. Part of the cbb3-type cytochrome c oxidase complex. CcoP subunit is required for transferring electrons from donor cytochrome c via its heme groups to CcoO subunit. From there, electrons are shuttled to the catalytic binuclear center of CcoN subunit where oxygen reduction takes place. The complex also functions as a proton pump. In Rubrivivax gelatinosus (Rhodocyclus gelatinosus), this protein is Cbb3-type cytochrome c oxidase subunit CcoP.